Reading from the N-terminus, the 441-residue chain is 3'-N-debenzoyl-2'-deoxytaxol N-benzoyltransferase (441 aa).

Active-site proton acceptor residues include His-163 and Asp-373.

The protein belongs to the plant acyltransferase family.

The catalysed reaction is 3'-N-debenzoyltaxol + benzoyl-CoA = paclitaxel + CoA + H(+). The protein operates within alkaloid biosynthesis; taxol biosynthesis. Functionally, catalyzes the stereoselective coupling of the surrogate substrate N-debenzoyl-(3'RS)-2'-deoxytaxol with benzoyl-CoA to form predominantly one 3'-epimer of 2'-deoxytaxol. This enzymatic reaction constitutes the final acylation in the taxol biosynthetic pathway. This Taxus canadensis (Canadian yew) protein is 3'-N-debenzoyl-2'-deoxytaxol N-benzoyltransferase.